Reading from the N-terminus, the 474-residue chain is Bifunctional protein HldE (474 aa).

Positions 1–318 (MKLSMPRFDQ…RAVQREQGSE (318 aa)) are ribokinase. 194 to 197 (NLSE) lines the ATP pocket. Residue Asp263 is part of the active site. The interval 343–474 (FTNGCFDILH…AIVEKIRQKG (132 aa)) is cytidylyltransferase.

It in the N-terminal section; belongs to the carbohydrate kinase PfkB family. In the C-terminal section; belongs to the cytidylyltransferase family. In terms of assembly, homodimer.

The enzyme catalyses D-glycero-beta-D-manno-heptose 7-phosphate + ATP = D-glycero-beta-D-manno-heptose 1,7-bisphosphate + ADP + H(+). It carries out the reaction D-glycero-beta-D-manno-heptose 1-phosphate + ATP + H(+) = ADP-D-glycero-beta-D-manno-heptose + diphosphate. Its pathway is nucleotide-sugar biosynthesis; ADP-L-glycero-beta-D-manno-heptose biosynthesis; ADP-L-glycero-beta-D-manno-heptose from D-glycero-beta-D-manno-heptose 7-phosphate: step 1/4. It functions in the pathway nucleotide-sugar biosynthesis; ADP-L-glycero-beta-D-manno-heptose biosynthesis; ADP-L-glycero-beta-D-manno-heptose from D-glycero-beta-D-manno-heptose 7-phosphate: step 3/4. In terms of biological role, catalyzes the phosphorylation of D-glycero-D-manno-heptose 7-phosphate at the C-1 position to selectively form D-glycero-beta-D-manno-heptose-1,7-bisphosphate. Catalyzes the ADP transfer from ATP to D-glycero-beta-D-manno-heptose 1-phosphate, yielding ADP-D-glycero-beta-D-manno-heptose. This Pseudomonas paraeruginosa (strain DSM 24068 / PA7) (Pseudomonas aeruginosa (strain PA7)) protein is Bifunctional protein HldE.